Here is a 505-residue protein sequence, read N- to C-terminus: Gap junction alpha-10 protein (505 aa).

At 1-16 (MGDWNLLGGILEEVHS) the chain is on the cytoplasmic side. Residues 17 to 37 (HSTIVGKIWLTILFIFRMLVL) traverse the membrane as a helical segment. Topologically, residues 38–76 (GVAAEDVWDDEQSAFACNTQQPGCNNICYDDAFPISLIR) are extracellular. Residues 77 to 97 (FWVLQIIFVSSPSLVYMGHAL) form a helical membrane-spanning segment. Topologically, residues 98–165 (YRLRDFEKQR…TYVLHILTRS (68 aa)) are cytoplasmic. The helical transmembrane segment at 166–186 (VLEVGFMIGQYILYGFQMHPI) threads the bilayer. Over 187–209 (YKCTQAPCPNSVDCFVSRPTEKT) the chain is Extracellular. The helical transmembrane segment at 210–230 (IFMLFMHSIAAISLLLNILEI) threads the bilayer. The Cytoplasmic segment spans residues 231–505 (FHLGIRKIMR…IIHETYVYVY (275 aa)). The span at 371-383 (TMTASQHRPSSAL) shows a compositional bias: polar residues. The disordered stretch occupies residues 371–491 (TMTASQHRPS…SKSSHVDSPP (121 aa)). Residues 437–446 (MSEKGQRHSD) show a composition bias toward basic and acidic residues. The span at 447–460 (SGSSRSLNSSCLDF) shows a compositional bias: low complexity.

This sequence belongs to the connexin family. Alpha-type (group II) subfamily. A connexon is composed of a hexamer of connexins. As to expression, low levels were detected in skin, heart, kidney, testis, ovary, intestine. Expression not detected in brain, sciatic nerve or liver. According to PubMed:15147297 expression is detected only in horizontal cells in the inner nuclear layer of the retina and not in other neurons of the central nervous system or tissues. Detected in the outer plexiform layer of the retina (at protein level).

It localises to the cell membrane. It is found in the cell junction. The protein resides in the gap junction. One gap junction consists of a cluster of closely packed pairs of transmembrane channels, the connexons, through which materials of low MW diffuse from one cell to a neighboring cell. Involved in tracer coupling between horizontal cells of the retina. May play a role in the regulation of horizontal cell patterning. In Mus musculus (Mouse), this protein is Gap junction alpha-10 protein (Gja10).